We begin with the raw amino-acid sequence, 274 residues long: MERGEGRRGDCSVQVRKKRTRRKSDGPDSIAETIKWWKEQNQKLQEENSSRKAPAKGSKKGCMAGKGGPENSNCAYRGVRQRTWGKWVAEIREPNRGRRLWLGSFPTALEAAHAYDEAARAMYGPTARVNFADNSTDANSGCTSAPSLMMSNGPATIPSDEKDELESPPFIVANGPAVLYQPDKKDVLERVVPEVQDVKTEGSNGLKRVCQERKNMEVCESEGIVLHKEVNISYDYFNVHEVVEMIIVELSADQKTEVHEEYQEGDDGFSLFSY.

Composition is skewed to basic and acidic residues over residues 1-10 (MERGEGRRGD) and 35-50 (KWWK…ENSS). The tract at residues 1–75 (MERGEGRRGD…KGGPENSNCA (75 aa)) is disordered. The segment at residues 75–132 (AYRGVRQRTWGKWVAEIREPNRGRRLWLGSFPTALEAAHAYDEAARAMYGPTARVNFA) is a DNA-binding region (AP2/ERF).

The protein belongs to the AP2/ERF transcription factor family. ERF subfamily.

It is found in the nucleus. Transcriptional activator that binds specifically to the DNA sequence 5'-[AG]CCGAC-3' of the cis-acting dehydration-responsive element (DRE). Binding to the C-repeat/DRE element mediates high salinity- and dehydration-inducible transcription. This Oryza sativa subsp. japonica (Rice) protein is Dehydration-responsive element-binding protein 2A (DREB2A).